Here is a 329-residue protein sequence, read N- to C-terminus: Endonuclease 8-like 2 (329 aa).

Catalysis depends on Pro2, which acts as the Schiff-base intermediate with DNA. Glu3 functions as the Proton donor in the catalytic mechanism. Lys50 functions as the Proton donor; for beta-elimination activity in the catalytic mechanism. Residue Lys50 is modified to N6-acetyllysine. Ser68 is subject to Phosphoserine. The tract at residues 68-116 (SLLSEPLREGEQKDKARHHQEASDPSSWSPGGDSAVPSGDDGLQCLGGD) is disordered. A compositionally biased stretch (basic and acidic residues) spans 73-89 (PLREGEQKDKARHHQEA). Residues 90–102 (SDPSSWSPGGDSA) show a composition bias toward low complexity. An N6-acetyllysine modification is found at Lys149. Asn227 serves as a coordination point for DNA. The FPG-type zinc finger occupies 280-316 (QIYQKEQCPAGHQVVRESLGPPGGFQRLTWWCPQCQP). The Proton donor; for delta-elimination activity role is filled by Arg306.

This sequence belongs to the FPG family. In terms of assembly, binds EP300.

It localises to the nucleus. The enzyme catalyses 2'-deoxyribonucleotide-(2'-deoxyribose 5'-phosphate)-2'-deoxyribonucleotide-DNA = a 3'-end 2'-deoxyribonucleotide-(2,3-dehydro-2,3-deoxyribose 5'-phosphate)-DNA + a 5'-end 5'-phospho-2'-deoxyribonucleoside-DNA + H(+). Its activity is regulated as follows. Acetylation of Lys-50 leads to loss of DNA nicking activity. Functionally, involved in base excision repair of DNA damaged by oxidation or by mutagenic agents. Has DNA glycosylase activity towards 5-hydroxyuracil and other oxidized derivatives of cytosine with a preference for mismatched double-stranded DNA (DNA bubbles). Has low or no DNA glycosylase activity towards thymine glycol, 2-hydroxyadenine, hypoxanthine and 8-oxoguanine. Has AP (apurinic/apyrimidinic) lyase activity and introduces nicks in the DNA strand. Cleaves the DNA backbone by beta-delta elimination to generate a single-strand break at the site of the removed base with both 3'- and 5'-phosphates. The protein is Endonuclease 8-like 2 (NEIL2) of Bos taurus (Bovine).